A 177-amino-acid chain; its full sequence is Small ribosomal subunit protein mS23 (177 aa).

Ala-2 bears the N-acetylalanine mark. Position 83 is an N6-succinyllysine (Lys-83). Lys-102 carries the post-translational modification N6-acetyllysine. The disordered stretch occupies residues 145 to 177; sequence LQASSEGHEPQEDDDLAQRGQVKQEPETAPSPP.

This sequence belongs to the mitochondrion-specific ribosomal protein mS23 family. In terms of assembly, component of the mitochondrial ribosome small subunit (28S) which comprises a 12S rRNA and about 30 distinct proteins.

Its subcellular location is the mitochondrion. This is Small ribosomal subunit protein mS23 from Mus musculus (Mouse).